The sequence spans 291 residues: MADDLGDEWWTQGDNSDVPEVEEETEHAEEKQPIKSTPKKRKVEKQIPDATKKKKATVKKECFITQERSEEKPDNESNKNKKRRKKKKTITDVLTSSKPVPGSPVDLVSLLKTYHSQTRSVIEQEELTLQDSCFLSCNDLTHSLSSYLKEVCPKWAKMQKQHTQTSSVVLLIVCGSALRTIDLIKQLVTFKGQAKVLKLFAKHIKVEEQIKSLSKGVTHIAVGTPGRICALLEKEGLTVQGLRYLVLDWNYRDQKQRRMVDVPEVKGDLLKMMDQGLIQSCREGTVKIGLF.

The tract at residues 1 to 96 is disordered; sequence MADDLGDEWW…KKTITDVLTS (96 aa). Residues 17–27 show a composition bias toward acidic residues; the sequence is DVPEVEEETEH. The segment covering 58–79 has biased composition (basic and acidic residues); the sequence is VKKECFITQERSEEKPDNESNK.

This sequence belongs to the CMS1 family.

The chain is Protein CMSS1 (cmss1) from Danio rerio (Zebrafish).